A 413-amino-acid polypeptide reads, in one-letter code: Palmitoyl-acyl carrier protein thioesterase, chloroplastic (413 aa).

The N-terminal 57 residues, 1–57 (MVATAVTSAFFPVTSSPDSSDSKNKKLGSIKSKPSVSSGSLQVKANAQAPPKINGTV), are a transit peptide targeting the chloroplast. The disordered stretch occupies residues 12 to 79 (PVTSSPDSSD…DGASSPPPRT (68 aa)). Positions 29–40 (SIKSKPSVSSGS) are enriched in low complexity. Residues Asn-310, His-312, and Cys-347 contribute to the active site. A disordered region spans residues 394 to 413 (WRPKHAKSSANMDQITAKRA).

It belongs to the acyl-ACP thioesterase family.

It localises to the plastid. Its subcellular location is the chloroplast. It catalyses the reaction hexadecanoyl-[ACP] + H2O = hexadecanoate + holo-[ACP] + H(+). Its function is as follows. Plays an essential role in chain termination during de novo fatty acid synthesis. High thioesterase activity for palmitoyl-ACP versus other acyl-ACPs. The polypeptide is Palmitoyl-acyl carrier protein thioesterase, chloroplastic (FATB1) (Gossypium hirsutum (Upland cotton)).